Consider the following 542-residue polypeptide: Chaperonin GroEL (542 aa).

Residues 29 to 32 (TLGP), 86 to 90 (DGTTT), Gly-413, and Asp-493 each bind ATP.

The protein belongs to the chaperonin (HSP60) family. In terms of assembly, forms a cylinder of 14 subunits composed of two heptameric rings stacked back-to-back. Interacts with the co-chaperonin GroES.

The protein localises to the cytoplasm. It catalyses the reaction ATP + H2O + a folded polypeptide = ADP + phosphate + an unfolded polypeptide.. In terms of biological role, together with its co-chaperonin GroES, plays an essential role in assisting protein folding. The GroEL-GroES system forms a nano-cage that allows encapsulation of the non-native substrate proteins and provides a physical environment optimized to promote and accelerate protein folding. The protein is Chaperonin GroEL of Elusimicrobium minutum (strain Pei191).